Here is a 301-residue protein sequence, read N- to C-terminus: Probable alpha-L-glutamate ligase (301 aa).

The 184-residue stretch at 104 to 287 (LQLLSRKGIG…IAGIIIQYLE (184 aa)) folds into the ATP-grasp domain. ATP-binding positions include lysine 141, 178–179 (EY), aspartate 187, and 211–213 (RSN). 3 residues coordinate Mg(2+): aspartate 248, glutamate 260, and asparagine 262. Aspartate 248, glutamate 260, and asparagine 262 together coordinate Mn(2+).

It belongs to the RimK family. Requires Mg(2+) as cofactor. Mn(2+) serves as cofactor.

This Pseudomonas aeruginosa (strain UCBPP-PA14) protein is Probable alpha-L-glutamate ligase.